Reading from the N-terminus, the 526-residue chain is Acetyl-CoA hydrolase (526 aa).

CoA is bound at residue 277–281; sequence GIGNI. Residue glutamate 302 is the 5-glutamyl coenzyme A thioester intermediate of the active site. 2 residues coordinate CoA: asparagine 392 and glycine 396.

It belongs to the acetyl-CoA hydrolase/transferase family.

The protein localises to the cytoplasm. The enzyme catalyses acetyl-CoA + H2O = acetate + CoA + H(+). Its function is as follows. Presumably involved in regulating the intracellular acetyl-CoA pool for fatty acid and cholesterol synthesis and fatty acid oxidation. The polypeptide is Acetyl-CoA hydrolase (ACH1) (Candida glabrata (strain ATCC 2001 / BCRC 20586 / JCM 3761 / NBRC 0622 / NRRL Y-65 / CBS 138) (Yeast)).